Here is a 340-residue protein sequence, read N- to C-terminus: Replication factor C subunit 5 (340 aa).

Met1 carries the N-acetylmethionine modification. Residue 60–67 participates in ATP binding; it reads GPPGTGKT.

Belongs to the activator 1 small subunits family. As to quaternary structure, subunit of the RFC complex, an heteropentameric complex consisting of a large subunit RFC1 and four small subunits RFC2, RFC3, RFC4 and RFC5; the RFC complex interacts with PCNA. Forms an heterotetrameric complex with RFC2, RFC3 and RFC4; this complex has ATPase activity but is not stimulated by PCNA. The heterotetramer of subunits RFC2, RFC3, RFC4 and RFC5 interacts with RAD17.

The protein localises to the nucleus. In terms of biological role, subunit of the replication factor C (RFC) complex which acts during elongation of primed DNA templates by DNA polymerases delta and epsilon, and is necessary for ATP-dependent loading of proliferating cell nuclear antigen (PCNA) onto primed DNA. This Homo sapiens (Human) protein is Replication factor C subunit 5 (RFC5).